The primary structure comprises 307 residues: MIHCGICGSPKIPNVEFLCAHCINGSPSILLRDKLKLLLLRQEVEQLKHDVGEQLEAGFAGNGQFGKQLQKLDVYNEKRRLIKLRQRVQLVKNKIDVKRNRYQELERYLKDEDHFDKDKKVFDVEEIVNDEALTMSKLSQVLQRKQTALFKELCQWFRIEKCDEDVNNNNNVSAYTIWGVPMINLKYSNEMDRDKQVISMRYIHQFINFSFNIWLFEGISDVSIENEQNVIQNYSQLIYDTLRLLQVRKLVSESVSIRDILIRYDLDGMIYYLSKSKYLSSLDDASNSYPPTLQNIKQLVASMIPSI.

A cysteine repeats region spans residues 4–22 (CGICGSPKIPNVEFLCAHC). Residues 36 to 113 (KLLLLRQEVE…ELERYLKDED (78 aa)) adopt a coiled-coil conformation.

The protein belongs to the ATG14 family.

It localises to the preautophagosomal structure membrane. The protein localises to the vacuole membrane. Its function is as follows. Required for cytoplasm to vacuole transport (Cvt) and autophagy as a part of the autophagy-specific VPS34 PI3-kinase complex I. This complex is essential to recruit the ATG8-phosphatidylinositol conjugate and the ATG12-ATG5 conjugate to the pre-autophagosomal structure. ATG14 mediates the specific binding of the VPS34 PI3-kinase complex I to the preautophagosomal structure (PAS). The sequence is that of Autophagy-related protein 14 (ATG14) from Kluyveromyces lactis (strain ATCC 8585 / CBS 2359 / DSM 70799 / NBRC 1267 / NRRL Y-1140 / WM37) (Yeast).